The chain runs to 177 residues: Large ribosomal subunit protein uL6 (177 aa).

This sequence belongs to the universal ribosomal protein uL6 family. As to quaternary structure, part of the 50S ribosomal subunit.

This protein binds to the 23S rRNA, and is important in its secondary structure. It is located near the subunit interface in the base of the L7/L12 stalk, and near the tRNA binding site of the peptidyltransferase center. The protein is Large ribosomal subunit protein uL6 of Rhizobium leguminosarum bv. trifolii (strain WSM2304).